Reading from the N-terminus, the 218-residue chain is Ribosomal RNA large subunit methyltransferase E (218 aa).

Residues glycine 64, tryptophan 66, aspartate 92, aspartate 108, and aspartate 133 each contribute to the S-adenosyl-L-methionine site. Lysine 173 (proton acceptor) is an active-site residue.

The protein belongs to the class I-like SAM-binding methyltransferase superfamily. RNA methyltransferase RlmE family.

It localises to the cytoplasm. The enzyme catalyses uridine(2552) in 23S rRNA + S-adenosyl-L-methionine = 2'-O-methyluridine(2552) in 23S rRNA + S-adenosyl-L-homocysteine + H(+). Specifically methylates the uridine in position 2552 of 23S rRNA at the 2'-O position of the ribose in the fully assembled 50S ribosomal subunit. This is Ribosomal RNA large subunit methyltransferase E from Paracidovorax citrulli (strain AAC00-1) (Acidovorax citrulli).